A 490-amino-acid chain; its full sequence is Probable diaminopimelate decarboxylase, chloroplastic (490 aa).

A chloroplast-targeting transit peptide spans 1–44 (MAAANLLSRALLPALNPNPSSHSNRVSPSAVSLRCRHGLTASVR). Residues 45-66 (ASLSTAAPSPPPRPAAAAADGR) are disordered. Lys-130 bears the N6-(pyridoxal phosphate)lysine mark. Pyridoxal 5'-phosphate contacts are provided by residues Gly-309 and 345-348 (EPGR). Residues Arg-348, Arg-384, and Tyr-388 each coordinate substrate. The active-site Proton donor is Cys-415. Residues Glu-416 and Tyr-444 each coordinate substrate. A pyridoxal 5'-phosphate-binding site is contributed by Tyr-444.

This sequence belongs to the Orn/Lys/Arg decarboxylase class-II family. LysA subfamily. In terms of assembly, homodimer. Requires pyridoxal 5'-phosphate as cofactor.

It localises to the plastid. The protein localises to the chloroplast. The catalysed reaction is meso-2,6-diaminopimelate + H(+) = L-lysine + CO2. It participates in amino-acid biosynthesis; L-lysine biosynthesis via DAP pathway; L-lysine from DL-2,6-diaminopimelate: step 1/1. In terms of biological role, specifically catalyzes the decarboxylation of meso-diaminopimelate (meso-DAP) to L-lysine. The polypeptide is Probable diaminopimelate decarboxylase, chloroplastic (LYSA) (Oryza sativa subsp. japonica (Rice)).